A 44-amino-acid polypeptide reads, in one-letter code: Large ribosomal subunit protein bL34 (44 aa).

This sequence belongs to the bacterial ribosomal protein bL34 family.

The polypeptide is Large ribosomal subunit protein bL34 (Wolbachia pipientis wMel).